The following is a 310-amino-acid chain: Putative S-adenosyl-L-methionine-dependent methyltransferase MSMEG_1888/MSMEI_1848 (310 aa).

S-adenosyl-L-methionine-binding positions include Asp-128 and 157-158; that span reads DL.

The protein belongs to the UPF0677 family.

Exhibits S-adenosyl-L-methionine-dependent methyltransferase activity. The protein is Putative S-adenosyl-L-methionine-dependent methyltransferase MSMEG_1888/MSMEI_1848 of Mycolicibacterium smegmatis (strain ATCC 700084 / mc(2)155) (Mycobacterium smegmatis).